We begin with the raw amino-acid sequence, 103 residues long: Large ribosomal subunit protein uL24 (103 aa).

The protein belongs to the universal ribosomal protein uL24 family. As to quaternary structure, part of the 50S ribosomal subunit.

Functionally, one of two assembly initiator proteins, it binds directly to the 5'-end of the 23S rRNA, where it nucleates assembly of the 50S subunit. Its function is as follows. One of the proteins that surrounds the polypeptide exit tunnel on the outside of the subunit. In Bacillus licheniformis (strain ATCC 14580 / DSM 13 / JCM 2505 / CCUG 7422 / NBRC 12200 / NCIMB 9375 / NCTC 10341 / NRRL NRS-1264 / Gibson 46), this protein is Large ribosomal subunit protein uL24.